The sequence spans 490 residues: Tandem C2 domains nuclear protein (490 aa).

Phosphoserine is present on residues serine 83, serine 156, serine 168, serine 174, and serine 211. The interval 189–215 (HDSLSSVPSSSSSRKNSQGSNRSLDTI) is disordered. A compositionally biased stretch (low complexity) spans 192–211 (LSSVPSSSSSRKNSQGSNRS). Phosphothreonine is present on residues threonine 214 and threonine 216. Serine 218 carries the post-translational modification Phosphoserine. 2 C2 domains span residues 223 to 342 (DFGR…SLDI) and 344 to 471 (PPSK…NQWK). Positions 447 to 449 (RRK) match the Nuclear localization signal motif.

The protein localises to the nucleus. This chain is Tandem C2 domains nuclear protein (TC2N), found in Homo sapiens (Human).